The following is a 112-amino-acid chain: Large ribosomal subunit protein bL17 (112 aa).

The protein belongs to the bacterial ribosomal protein bL17 family. Part of the 50S ribosomal subunit. Contacts protein L32.

This Carboxydothermus hydrogenoformans (strain ATCC BAA-161 / DSM 6008 / Z-2901) protein is Large ribosomal subunit protein bL17.